The following is a 241-amino-acid chain: Small ribosomal subunit protein uS2 (241 aa).

It belongs to the universal ribosomal protein uS2 family.

This is Small ribosomal subunit protein uS2 from Erwinia tasmaniensis (strain DSM 17950 / CFBP 7177 / CIP 109463 / NCPPB 4357 / Et1/99).